Reading from the N-terminus, the 509-residue chain is Photosystem II CP47 reaction center protein (509 aa).

6 consecutive transmembrane segments (helical) span residues 21–36 (SVHI…WAGS), 101–115 (IVFS…IWHW), 140–156 (GIHL…FGAF), 203–218 (IAAG…FHLS), 237–252 (VLSS…AFVV), and 457–472 (SFAL…HGAR).

It belongs to the PsbB/PsbC family. PsbB subfamily. PSII is composed of 1 copy each of membrane proteins PsbA, PsbB, PsbC, PsbD, PsbE, PsbF, PsbH, PsbI, PsbJ, PsbK, PsbL, PsbM, PsbT, PsbX, PsbY, PsbZ, Psb30/Ycf12, at least 3 peripheral proteins of the oxygen-evolving complex and a large number of cofactors. It forms dimeric complexes. Requires Binds multiple chlorophylls. PSII binds additional chlorophylls, carotenoids and specific lipids. as cofactor.

The protein localises to the plastid. It localises to the chloroplast thylakoid membrane. Functionally, one of the components of the core complex of photosystem II (PSII). It binds chlorophyll and helps catalyze the primary light-induced photochemical processes of PSII. PSII is a light-driven water:plastoquinone oxidoreductase, using light energy to abstract electrons from H(2)O, generating O(2) and a proton gradient subsequently used for ATP formation. The protein is Photosystem II CP47 reaction center protein of Cicer arietinum (Chickpea).